The primary structure comprises 278 residues: Indole-3-glycerol phosphate synthase (278 aa).

It belongs to the TrpC family.

The catalysed reaction is 1-(2-carboxyphenylamino)-1-deoxy-D-ribulose 5-phosphate + H(+) = (1S,2R)-1-C-(indol-3-yl)glycerol 3-phosphate + CO2 + H2O. It participates in amino-acid biosynthesis; L-tryptophan biosynthesis; L-tryptophan from chorismate: step 4/5. In Pseudomonas fluorescens (strain ATCC BAA-477 / NRRL B-23932 / Pf-5), this protein is Indole-3-glycerol phosphate synthase.